A 188-amino-acid chain; its full sequence is Peptidyl-tRNA hydrolase (188 aa).

Phenylalanine 15 contributes to the tRNA binding site. Histidine 20 acts as the Proton acceptor in catalysis. Positions 64, 66, and 112 each coordinate tRNA.

The protein belongs to the PTH family. Monomer.

The protein localises to the cytoplasm. It catalyses the reaction an N-acyl-L-alpha-aminoacyl-tRNA + H2O = an N-acyl-L-amino acid + a tRNA + H(+). In terms of biological role, hydrolyzes ribosome-free peptidyl-tRNAs (with 1 or more amino acids incorporated), which drop off the ribosome during protein synthesis, or as a result of ribosome stalling. Its function is as follows. Catalyzes the release of premature peptidyl moieties from peptidyl-tRNA molecules trapped in stalled 50S ribosomal subunits, and thus maintains levels of free tRNAs and 50S ribosomes. This chain is Peptidyl-tRNA hydrolase, found in Borreliella burgdorferi (strain ATCC 35210 / DSM 4680 / CIP 102532 / B31) (Borrelia burgdorferi).